Consider the following 256-residue polypeptide: (R)-S-adenosyl-L-methionine hydrolase (256 aa).

Residues aspartate 7, histidine 41, aspartate 68, and asparagine 183 each contribute to the adenosine site. Residues asparagine 183, tyrosine 212, serine 226, glutamate 231, valine 234, and methionine 236 each coordinate (R)-S-adenosyl-L-methionine. Position 234 (valine 234) interacts with adenosine.

It belongs to the SAM hydrolase / SAM-dependent halogenase family. As to quaternary structure, homotrimer.

It catalyses the reaction (R)-S-adenosyl-L-methionine + H2O = adenosine + L-methionine + H(+). Its function is as follows. Catalyzes the hydrolysis of S-adenosyl-L-methionine (SAM) into adenosine and L-methionine. Is likely stereoselective, specifically hydrolyzing (R)-S-adenosyl-L-methionine ((R)-SAM), the inactive form of the ubiquitous cofactor SAM, and not the active form of SAM, (S)-S-adenosyl-L-methionine. Probaly plays a role in preventing accumulation of (R)-S-adenosyl-L-methionine in cells; maintenance of (S)-S-denosyl-L-methionine homochirality is important for cellular health given that the (R)-form is largely inactive as a methyl donor and can function as an inhibitor of methyltransferases. Is unable to mediate a fluorination or chlorination reaction with SAM. The sequence is that of (R)-S-adenosyl-L-methionine hydrolase from Pyrococcus horikoshii (strain ATCC 700860 / DSM 12428 / JCM 9974 / NBRC 100139 / OT-3).